Reading from the N-terminus, the 419-residue chain is UDP-N-acetylglucosamine 1-carboxyvinyltransferase (419 aa).

22 to 23 (KN) is a phosphoenolpyruvate binding site. Residue R92 participates in UDP-N-acetyl-alpha-D-glucosamine binding. C116 functions as the Proton donor in the catalytic mechanism. A 2-(S-cysteinyl)pyruvic acid O-phosphothioketal modification is found at C116. Residues 121 to 125 (RPIDQ), D305, and I327 contribute to the UDP-N-acetyl-alpha-D-glucosamine site.

It belongs to the EPSP synthase family. MurA subfamily.

The protein resides in the cytoplasm. It carries out the reaction phosphoenolpyruvate + UDP-N-acetyl-alpha-D-glucosamine = UDP-N-acetyl-3-O-(1-carboxyvinyl)-alpha-D-glucosamine + phosphate. Its pathway is cell wall biogenesis; peptidoglycan biosynthesis. Functionally, cell wall formation. Adds enolpyruvyl to UDP-N-acetylglucosamine. The chain is UDP-N-acetylglucosamine 1-carboxyvinyltransferase from Trichlorobacter lovleyi (strain ATCC BAA-1151 / DSM 17278 / SZ) (Geobacter lovleyi).